The chain runs to 984 residues: G patch domain-containing protein TGH homolog (984 aa).

Over residues E130–P144 the composition is skewed to basic and acidic residues. Positions E130–D153 are disordered. The 43-residue stretch at T160–S202 folds into the G-patch domain. The SURP motif repeat unit spans residues L408 to A450. Disordered regions lie at residues Q464–P503, T679–S717, L775–R806, and E820–R984. Residues S473–T495 show a composition bias toward basic and acidic residues. The span at T679 to S695 shows a compositional bias: polar residues. Residues A697–T709 show a composition bias toward low complexity. Residues Q814 to S859 adopt a coiled-coil conformation. A compositionally biased stretch (basic and acidic residues) spans L843–R858. Basic residues-rich tracts occupy residues S882–R892, H905–R922, and T934–T946. Positions R947 to R974 are enriched in basic and acidic residues. Over residues S975–R984 the composition is skewed to basic residues.

The protein resides in the nucleus. In terms of biological role, functions as a component of microRNA (miRNA) and small interfering RNA (siRNA) biogenesis. May assist Dicer-like (DCL) proteins to efficiently process and/or recruit the precursors of miRNAs and siRNAs. The protein is G patch domain-containing protein TGH homolog of Oryza sativa subsp. japonica (Rice).